The following is a 432-amino-acid chain: Glutamate-1-semialdehyde 2,1-aminomutase (432 aa).

At K265 the chain carries N6-(pyridoxal phosphate)lysine.

This sequence belongs to the class-III pyridoxal-phosphate-dependent aminotransferase family. HemL subfamily. Homodimer. Requires pyridoxal 5'-phosphate as cofactor.

It localises to the cytoplasm. The catalysed reaction is (S)-4-amino-5-oxopentanoate = 5-aminolevulinate. Its pathway is porphyrin-containing compound metabolism; protoporphyrin-IX biosynthesis; 5-aminolevulinate from L-glutamyl-tRNA(Glu): step 2/2. In Histophilus somni (strain 2336) (Haemophilus somnus), this protein is Glutamate-1-semialdehyde 2,1-aminomutase.